A 367-amino-acid chain; its full sequence is Cytochrome b (367 aa).

Transmembrane regions (helical) follow at residues 20 to 40 (MGSILGMILGLQLLTGILLSM), 64 to 85 (WFLRLLHANGASLFFLFMYAHI), 101 to 121 (WMVGVTIFLVSMATAFLGYVL), and 166 to 186 (FFSLHFLLPFLISGLALLHII). 2 residues coordinate heme b: histidine 70 and histidine 84. Heme b contacts are provided by histidine 170 and histidine 184. Histidine 189 serves as a coordination point for a ubiquinone. 4 helical membrane passes run 214–234 (IKDSVGFLMVFGVLLMITFFS), 276–296 (LGGVVALLMSILILYFLPLSS), 308–328 (IYQVLFWILVVTFIILTWLGA), and 335–355 (YLSLAGPLTLLYFLMFLLLGM).

This sequence belongs to the cytochrome b family. As to quaternary structure, the main subunits of complex b-c1 are: cytochrome b, cytochrome c1 and the Rieske protein. Heme b is required as a cofactor.

The protein localises to the mitochondrion inner membrane. Its function is as follows. Component of the ubiquinol-cytochrome c reductase complex (complex III or cytochrome b-c1 complex) that is part of the mitochondrial respiratory chain. The b-c1 complex mediates electron transfer from ubiquinol to cytochrome c. Contributes to the generation of a proton gradient across the mitochondrial membrane that is then used for ATP synthesis. The chain is Cytochrome b (MT-CYB) from Albinaria caerulea (Land snail).